The following is a 347-amino-acid chain: NADH-quinone oxidoreductase subunit H 1 (347 aa).

The next 9 helical transmembrane spans lie at 14–34 (IMIG…AYVL), 50–70 (PNVV…KFVF), 83–103 (IFLL…AVIP), 115–135 (VGIL…IMGG), 161–181 (IGFV…TDIV), 198–218 (FLDW…ISAL), 258–278 (AICL…LPPV), 286–306 (VPGI…FAMV), and 321–341 (LGWK…AFVL).

It belongs to the complex I subunit 1 family. As to quaternary structure, NDH-1 is composed of 14 different subunits. Subunits NuoA, H, J, K, L, M, N constitute the membrane sector of the complex.

It is found in the cell inner membrane. The catalysed reaction is a quinone + NADH + 5 H(+)(in) = a quinol + NAD(+) + 4 H(+)(out). Its function is as follows. NDH-1 shuttles electrons from NADH, via FMN and iron-sulfur (Fe-S) centers, to quinones in the respiratory chain. The immediate electron acceptor for the enzyme in this species is believed to be ubiquinone. Couples the redox reaction to proton translocation (for every two electrons transferred, four hydrogen ions are translocated across the cytoplasmic membrane), and thus conserves the redox energy in a proton gradient. This subunit may bind ubiquinone. This Rhizobium meliloti (strain 1021) (Ensifer meliloti) protein is NADH-quinone oxidoreductase subunit H 1.